The primary structure comprises 398 residues: Cysteine protease ATG4A (398 aa).

The active-site Nucleophile is the Cys77. Residues Asp279 and His281 contribute to the active site. The short motif at 393-396 is the LIR element; that stretch reads FEIL.

This sequence belongs to the peptidase C54 family. In terms of assembly, interacts with ATG9A; the interaction is direct.

It localises to the cytoplasm. The catalysed reaction is [protein]-C-terminal L-amino acid-glycyl-phosphatidylethanolamide + H2O = [protein]-C-terminal L-amino acid-glycine + a 1,2-diacyl-sn-glycero-3-phosphoethanolamine. Its activity is regulated as follows. Inhibited by N-ethylmaleimide. Redox-regulated during autophagy since reducing conditions activate ATG4A whereas an oxidizing environment such as the presence of H(2)O(2) inhibits its activity. Functionally, cysteine protease that plays a key role in autophagy by mediating both proteolytic activation and delipidation of ATG8 family proteins. The protease activity is required for proteolytic activation of ATG8 family proteins: cleaves the C-terminal amino acid of ATG8 proteins to reveal a C-terminal glycine. Exposure of the glycine at the C-terminus is essential for ATG8 proteins conjugation to phosphatidylethanolamine (PE) and insertion to membranes, which is necessary for autophagy. Preferred substrate is GABARAPL2 followed by MAP1LC3A and GABARAP. Protease activity is also required to counteract formation of high-molecular weight conjugates of ATG8 proteins (ATG8ylation): acts as a deubiquitinating-like enzyme that removes ATG8 conjugated to other proteins, such as ATG3. In addition to the protease activity, also mediates delipidation of ATG8 family proteins. Catalyzes delipidation of PE-conjugated forms of ATG8 proteins during macroautophagy. Compared to ATG4B, the major protein for proteolytic activation of ATG8 proteins, shows weaker ability to cleave the C-terminal amino acid of ATG8 proteins, while it displays stronger delipidation activity. Involved in phagophore growth during mitophagy independently of its protease activity and of ATG8 proteins: acts by regulating ATG9A trafficking to mitochondria and promoting phagophore-endoplasmic reticulum contacts during the lipid transfer phase of mitophagy. This is Cysteine protease ATG4A from Pongo abelii (Sumatran orangutan).